The primary structure comprises 125 residues: Photosystem II extrinsic protein U (125 aa).

Positions 1–29 are cleaved as a signal peptide; it reads MKRLLSWLTGLVVMAGLLFSLATPSGVQA.

The protein belongs to the PsbU family. In terms of assembly, PSII is composed of 1 copy each of membrane proteins PsbA, PsbB, PsbC, PsbD, PsbE, PsbF, PsbH, PsbI, PsbJ, PsbK, PsbL, PsbM, PsbT, PsbX, PsbY, PsbZ, Psb30/Ycf12, peripheral proteins PsbO, CyanoQ (PsbQ), PsbU, PsbV and a large number of cofactors. It forms dimeric complexes.

The protein resides in the cellular thylakoid membrane. In terms of biological role, one of the extrinsic, lumenal subunits of photosystem II (PSII). PSII is a light-driven water plastoquinone oxidoreductase, using light energy to abstract electrons from H(2)O, generating a proton gradient subsequently used for ATP formation. The extrinsic proteins stabilize the structure of photosystem II oxygen-evolving complex (OEC), the ion environment of oxygen evolution and protect the OEC against heat-induced inactivation. This Synechococcus sp. (strain WH7803) protein is Photosystem II extrinsic protein U.